A 417-amino-acid chain; its full sequence is Phosphoglycerate kinase (417 aa).

Residues valine 23, aspartate 24, phenylalanine 25, asparagine 26, glutamine 38, arginine 39, serine 62, histidine 63, glycine 65, arginine 66, leucine 121, arginine 122, histidine 169, and arginine 170 each coordinate (2R)-3-phosphoglycerate. An ADP-binding site is contributed by glycine 213. Glycine 213 contacts CDP. AMP-binding residues include alanine 214 and lysine 215. Alanine 214 lines the ATP pocket. Alanine 214 provides a ligand contact to Mg(2+). Aspartate 218 contacts CDP. Aspartate 218 is a Mg(2+) binding site. Lysine 219 contributes to the AMP binding site. Residue lysine 219 coordinates ATP. Residue glycine 237 participates in ADP binding. Glycine 237 contributes to the CDP binding site. Glycine 238 and glycine 312 together coordinate AMP. 2 residues coordinate ATP: glycine 238 and glycine 312. Residues glycine 337 and phenylalanine 342 each contribute to the CDP site. Residue phenylalanine 342 participates in ADP binding. Glutamate 343 is a binding site for AMP. The ATP site is built by glutamate 343, aspartate 374, and threonine 375. A Mg(2+)-binding site is contributed by aspartate 374.

Belongs to the phosphoglycerate kinase family. As to quaternary structure, monomer. It depends on Mg(2+) as a cofactor.

Its subcellular location is the cytoplasm. The protein localises to the mitochondrion. It carries out the reaction (2R)-3-phosphoglycerate + ATP = (2R)-3-phospho-glyceroyl phosphate + ADP. It functions in the pathway carbohydrate degradation; glycolysis; pyruvate from D-glyceraldehyde 3-phosphate: step 2/5. Functionally, catalyzes one of the two ATP producing reactions in the glycolytic pathway via the reversible conversion of 1,3-diphosphoglycerate to 3-phosphoglycerate. Both L- and D- forms of purine and pyrimidine nucleotides can be used as substrates, but the activity is much lower on pyrimidines. Negatively regulates the biosynthesis of acetyl-CoA from pyruvate in the mitochondrion. This chain is Phosphoglycerate kinase (PGK1), found in Yarrowia lipolytica (strain CLIB 122 / E 150) (Yeast).